Reading from the N-terminus, the 149-residue chain is 3-hydroxyacyl-[acyl-carrier-protein] dehydratase FabZ (149 aa).

Residue H53 is part of the active site.

It belongs to the thioester dehydratase family. FabZ subfamily.

Its subcellular location is the cytoplasm. The catalysed reaction is a (3R)-hydroxyacyl-[ACP] = a (2E)-enoyl-[ACP] + H2O. Its function is as follows. Involved in unsaturated fatty acids biosynthesis. Catalyzes the dehydration of short chain beta-hydroxyacyl-ACPs and long chain saturated and unsaturated beta-hydroxyacyl-ACPs. The chain is 3-hydroxyacyl-[acyl-carrier-protein] dehydratase FabZ from Polynucleobacter asymbioticus (strain DSM 18221 / CIP 109841 / QLW-P1DMWA-1) (Polynucleobacter necessarius subsp. asymbioticus).